A 306-amino-acid polypeptide reads, in one-letter code: Aspartate carbamoyltransferase catalytic subunit (306 aa).

2 residues coordinate carbamoyl phosphate: Arg55 and Thr56. Lys84 contacts L-aspartate. Arg105, His133, and Gln136 together coordinate carbamoyl phosphate. L-aspartate-binding residues include Arg166 and Arg227. Positions 265 and 266 each coordinate carbamoyl phosphate.

This sequence belongs to the aspartate/ornithine carbamoyltransferase superfamily. ATCase family. In terms of assembly, heterododecamer (2C3:3R2) of six catalytic PyrB chains organized as two trimers (C3), and six regulatory PyrI chains organized as three dimers (R2).

It catalyses the reaction carbamoyl phosphate + L-aspartate = N-carbamoyl-L-aspartate + phosphate + H(+). The protein operates within pyrimidine metabolism; UMP biosynthesis via de novo pathway; (S)-dihydroorotate from bicarbonate: step 2/3. Functionally, catalyzes the condensation of carbamoyl phosphate and aspartate to form carbamoyl aspartate and inorganic phosphate, the committed step in the de novo pyrimidine nucleotide biosynthesis pathway. This is Aspartate carbamoyltransferase catalytic subunit from Neisseria meningitidis serogroup C / serotype 2a (strain ATCC 700532 / DSM 15464 / FAM18).